Consider the following 122-residue polypeptide: Large ribosomal subunit protein uL14 (122 aa).

This sequence belongs to the universal ribosomal protein uL14 family. In terms of assembly, part of the 50S ribosomal subunit. Forms a cluster with proteins L3 and L19. In the 70S ribosome, L14 and L19 interact and together make contacts with the 16S rRNA in bridges B5 and B8.

Its function is as follows. Binds to 23S rRNA. Forms part of two intersubunit bridges in the 70S ribosome. In Syntrophomonas wolfei subsp. wolfei (strain DSM 2245B / Goettingen), this protein is Large ribosomal subunit protein uL14.